A 518-amino-acid chain; its full sequence is Protein translocase subunit SecD (518 aa).

The next 6 membrane-spanning stretches (helical) occupy residues 9 to 29 (IVLS…NFIQ), 356 to 376 (GKKA…LSYG), 377 to 397 (VIGL…LALL), 406 to 426 (LPGI…NVLI), 451 to 473 (AFAT…YIFG), and 486 to 506 (IGII…IDIW).

The protein belongs to the SecD/SecF family. SecD subfamily. As to quaternary structure, forms a complex with SecF. Part of the essential Sec protein translocation apparatus which comprises SecA, SecYEG and auxiliary proteins SecDF-YajC and YidC.

The protein resides in the cell inner membrane. Part of the Sec protein translocase complex. Interacts with the SecYEG preprotein conducting channel. SecDF uses the proton motive force (PMF) to complete protein translocation after the ATP-dependent function of SecA. This chain is Protein translocase subunit SecD, found in Rickettsia typhi (strain ATCC VR-144 / Wilmington).